The following is a 167-amino-acid chain: UPF0114 protein in repA1-repA2 intergenic region (167 aa).

3 helical membrane-spanning segments follow: residues 15-35 (LMFP…LKFF), 53-73 (LVLA…LVMV), and 136-156 (IMLC…MAYI).

It belongs to the UPF0114 family.

The protein resides in the cell membrane. This chain is UPF0114 protein in repA1-repA2 intergenic region, found in Buchnera aphidicola subsp. Schizaphis graminum (strain Sg).